Consider the following 261-residue polypeptide: Cytochrome c oxidase subunit 3 (261 aa).

The Mitochondrial matrix segment spans residues 1–15 (MTHQTHAYHMVNPSP). The chain crosses the membrane as a helical span at residues 16-34 (WPLTGALSALLMTSGLAMW). The Mitochondrial intermembrane portion of the chain corresponds to 35–40 (FHFNST). Residues 41–66 (ILLMIGLTTNTLTMYQWWRDVIREST) traverse the membrane as a helical segment. The Mitochondrial matrix portion of the chain corresponds to 67 to 72 (FQGHHT). Residues 73–105 (PTVQKGLRYGMILFIISEVLFFTGFFWAFYHSS) traverse the membrane as a helical segment. Over 106-128 (LAPTPELGGCWPPTGIHPLNPLE) the chain is Mitochondrial intermembrane. The helical transmembrane segment at 129–152 (VPLLNTSVLLASGVSITWAHHSLM) threads the bilayer. The Mitochondrial matrix segment spans residues 153–155 (EGN). A helical transmembrane segment spans residues 156–183 (RYPMLQALFITIALGVYFTLLQASEYYE). Topologically, residues 184–190 (APFTISD) are mitochondrial intermembrane. A helical transmembrane segment spans residues 191–223 (GVYGSTFFVATGFHGLHVIIGSTFLIVCFFRQL). Topologically, residues 224–232 (KFHFTSNHH) are mitochondrial matrix. The helical transmembrane segment at 233 to 256 (FGFEAAAWYWHFVDVVWLFLYVSI) threads the bilayer. Topologically, residues 257–261 (YWWGS) are mitochondrial intermembrane.

The protein belongs to the cytochrome c oxidase subunit 3 family. As to quaternary structure, component of the cytochrome c oxidase (complex IV, CIV), a multisubunit enzyme composed of 14 subunits. The complex is composed of a catalytic core of 3 subunits MT-CO1, MT-CO2 and MT-CO3, encoded in the mitochondrial DNA, and 11 supernumerary subunits COX4I, COX5A, COX5B, COX6A, COX6B, COX6C, COX7A, COX7B, COX7C, COX8 and NDUFA4, which are encoded in the nuclear genome. The complex exists as a monomer or a dimer and forms supercomplexes (SCs) in the inner mitochondrial membrane with NADH-ubiquinone oxidoreductase (complex I, CI) and ubiquinol-cytochrome c oxidoreductase (cytochrome b-c1 complex, complex III, CIII), resulting in different assemblies (supercomplex SCI(1)III(2)IV(1) and megacomplex MCI(2)III(2)IV(2)).

It is found in the mitochondrion inner membrane. The enzyme catalyses 4 Fe(II)-[cytochrome c] + O2 + 8 H(+)(in) = 4 Fe(III)-[cytochrome c] + 2 H2O + 4 H(+)(out). Component of the cytochrome c oxidase, the last enzyme in the mitochondrial electron transport chain which drives oxidative phosphorylation. The respiratory chain contains 3 multisubunit complexes succinate dehydrogenase (complex II, CII), ubiquinol-cytochrome c oxidoreductase (cytochrome b-c1 complex, complex III, CIII) and cytochrome c oxidase (complex IV, CIV), that cooperate to transfer electrons derived from NADH and succinate to molecular oxygen, creating an electrochemical gradient over the inner membrane that drives transmembrane transport and the ATP synthase. Cytochrome c oxidase is the component of the respiratory chain that catalyzes the reduction of oxygen to water. Electrons originating from reduced cytochrome c in the intermembrane space (IMS) are transferred via the dinuclear copper A center (CU(A)) of subunit 2 and heme A of subunit 1 to the active site in subunit 1, a binuclear center (BNC) formed by heme A3 and copper B (CU(B)). The BNC reduces molecular oxygen to 2 water molecules using 4 electrons from cytochrome c in the IMS and 4 protons from the mitochondrial matrix. In Raphicerus campestris (Steenbok), this protein is Cytochrome c oxidase subunit 3 (MT-CO3).